Consider the following 562-residue polypeptide: MOB kinase activator-like 2 (562 aa).

The tract at residues lysine 30 to proline 50 is disordered. Low complexity predominate over residues serine 31–glycine 45. 4 residues coordinate Zn(2+): cysteine 170, cysteine 175, histidine 250, and histidine 255. Disordered stretches follow at residues aspartate 304–alanine 378, asparagine 468–valine 523, and glycine 538–alanine 562. Low complexity-rich tracts occupy residues aspartate 305–serine 349, asparagine 357–alanine 378, and asparagine 471–histidine 481. Basic residues predominate over residues leucine 482 to histidine 514. Residues alanine 547 to alanine 562 are compositionally biased toward low complexity.

It belongs to the MOB1/phocein family. Interacts with and activates trc, also interacts with wts.

The protein localises to the cytoplasm. It localises to the nucleus. In terms of biological role, required for the normal morphogenesis of a variety of polarized outgrowths including epidermal hairs, bristles, arista laterals, and dendrites. In Drosophila pseudoobscura pseudoobscura (Fruit fly), this protein is MOB kinase activator-like 2.